Reading from the N-terminus, the 738-residue chain is Junction plakoglobin (738 aa).

ARM repeat units lie at residues 128-167 (NYQD…QLSK), 168-211 (KEAS…LSHH), 212-251 (REGL…NLLL), 254-293 (EGAK…LLAY), 294-337 (GNQE…LSVC), 338-377 (PSNK…NLSD), 379-416 (ATKQ…NLTC), 419-460 (GRNK…HLTS), 466-506 (EVAQ…NLAL), 508-547 (PANH…QPYT), 570-609 (PVNR…ELAQ), and 611-657 (KEAA…ADYR).

Belongs to the beta-catenin family. Homodimer.

The protein localises to the cell junction. The protein resides in the adherens junction. It localises to the desmosome. Its subcellular location is the cytoplasm. It is found in the cytoskeleton. The protein localises to the membrane. Common junctional plaque protein. The membrane-associated plaques are architectural elements in an important strategic position to influence the arrangement and function of both the cytoskeleton and the cells within the tissue. The presence of plakoglobin in both the desmosomes and in the intermediate junctions suggests that it plays a central role in the structure and function of submembranous plaques. In Xenopus laevis (African clawed frog), this protein is Junction plakoglobin (jup).